The sequence spans 72 residues: Large ribosomal subunit protein bL28 (72 aa).

Belongs to the bacterial ribosomal protein bL28 family.

This Chlorobium phaeobacteroides (strain BS1) protein is Large ribosomal subunit protein bL28.